We begin with the raw amino-acid sequence, 752 residues long: Iron-sulfur clusters transporter ABCB7, mitochondrial (752 aa).

The transit peptide at 1–22 (MALLAMHSWRWAAAAAAFEKRR) directs the protein to the mitochondrion. Residues 23–140 (HSAILIRPLV…KDRPDLRARV (118 aa)) are Mitochondrial matrix-facing. The ABC transmembrane type-1 domain occupies 140–436 (VAISLGFLGG…LGTVYRETRQ (297 aa)). Residues 141-161 (AISLGFLGGAKAMNIVVPFMF) form a helical membrane-spanning segment. The Mitochondrial intermembrane segment spans residues 162 to 185 (KYAVDSLNQMSGNMLNLSDAPNTV). A helical membrane pass occupies residues 186 to 206 (ATMATAVLIGYGVSRAGAAFF). Residues 207–259 (NEVRNAVFGKVAQNSIRRIAKNVFLHLHNLDLGFHLSRQTGALSKAIDRGTRG) are Mitochondrial matrix-facing. N6-acetyllysine is present on residues Lys216 and Lys251. The chain crosses the membrane as a helical span at residues 260–280 (ISFVLSALVFNLLPIMFEVML). At 281-290 (VSGVLYYKCG) the chain is on the mitochondrial intermembrane side. A helical transmembrane segment spans residues 291–311 (AQFALVTLGTLGTYTAFTVAV). At 312-382 (TRWRTRFRIE…TLAMLNFGQS (71 aa)) the chain is on the mitochondrial matrix side. 315–319 (RTRFR) lines the glutathione pocket. Residue Ser336 is modified to Phosphoserine. Phosphotyrosine is present on Tyr340. Thr342 carries the post-translational modification Phosphothreonine. 378–381 (NFGQ) is a binding site for glutathione. Residues 383–403 (AIFSVGLTAIMVLASQGIVAG) form a helical membrane-spanning segment. Residues 404–409 (TLTVGD) are Mitochondrial intermembrane-facing. A helical transmembrane segment spans residues 410–430 (LVMVNGLLFQLSLPLNFLGTV). Residue Gly428 participates in glutathione binding. The Mitochondrial matrix segment spans residues 431 to 752 (YRETRQALID…SVKGCGNCSC (322 aa)). The 235-residue stretch at 472–706 (VAFDNVHFEY…PHSIYSEMWH (235 aa)) folds into the ABC transporter domain. Residues Tyr481 and 505–516 (GGSGSGKSTIVR) each bind ATP.

Belongs to the ABC transporter superfamily. ABCB family. Heavy Metal importer (TC 3.A.1.210) subfamily. Homodimer or heterodimer. Interacts with C10orf88/PAAT. Forms a complex with ABCB10 and FECH, where a dimeric FECH bridges ABCB7 and ABCB10 homodimers; this complex may be required for cellular iron homeostasis, mitochondrial function and heme biosynthesis. Interacts with FECH. Interacts with ATP5F1A. Interacts with COX4I1; this interaction allows the regulation of cellular iron homeostasis and cellular reactive oxygen species (ROS) levels in cardiomyocytes.

It is found in the mitochondrion inner membrane. It carries out the reaction (glutathione)4[2Fe(III)-2S] cluster(in) + ATP + H2O = (glutathione)4[2Fe(III)-2S] cluster(out) + ADP + phosphate + H(+). ATPase activity is stimulated by glutathione. Its function is as follows. Exports glutathione-coordinated iron-sulfur clusters such as [2Fe-2S]-(GS)4 cluster from the mitochondria to the cytosol in an ATP-dependent manner allowing the assembly of the cytosolic iron-sulfur (Fe/S) cluster-containing proteins and participates in iron homeostasis. Moreover, through a functional complex formed of ABCB7, FECH and ABCB10, also plays a role in the cellular iron homeostasis, mitochondrial function and heme biosynthesis. In cardiomyocytes, regulates cellular iron homeostasis and cellular reactive oxygen species (ROS) levels through its interaction with COX4I1. May also play a role in hematopoiesis. This is Iron-sulfur clusters transporter ABCB7, mitochondrial from Homo sapiens (Human).